Here is a 1365-residue protein sequence, read N- to C-terminus: Histone-lysine N-methyltransferase NSD2 (1365 aa).

Phosphothreonine is present on residues threonine 110 and threonine 114. Serine 121 carries the phosphoserine modification. The segment at 149-169 (ADVSQSEENEQKSDNKTRRNR) is disordered. The residue at position 172 (serine 172) is a Phosphoserine. The PWWP 1 domain maps to 222–286 (VGDLVWSKVS…FEKSLVAFEG (65 aa)). Disordered regions lie at residues 373–455 (MVDS…RKGD), 513–567 (QSEE…DKTA), and 594–658 (CKPL…SKKS). Serine 376 carries the post-translational modification Phosphoserine. Threonine 422 is subject to Phosphothreonine. Positions 453-521 (KGDSAAQFLV…AQSEEDSGNG (69 aa)) form a DNA-binding region, HMG box. Residues 552–567 (DKHSLRKRETITDKTA) are compositionally biased toward basic and acidic residues. The span at 603 to 623 (ASATASSALGFNKSSSPSASL) shows a compositional bias: polar residues. Acidic residues predominate over residues 632–648 (PGDEPSESPYESADETQ). 3 consecutive PHD-type zinc fingers follow at residues 667-713 (EYVC…CASG), 714-770 (IHSC…CHAS), and 831-875 (VSWC…CRAG). Residues 880 to 942 (FQDIIWVKLG…QARVFPYMEG (63 aa)) form the PWWP 2 domain. The 51-residue stretch at 1011–1061 (SEIPKCNCKPTDENPCGSDSECLNRMLMFECHPQVCPAGEYCQNQCFTKRQ) folds into the AWS domain. Positions 1016, 1018, 1026, 1032, 1041, 1046, and 1052 each coordinate Zn(2+). An SET domain is found at 1063–1180 (PETKIIKTDG…AGTELTFNYN (118 aa)). S-adenosyl-L-methionine is bound by residues tryptophan 1075, 1115-1118 (THFY), and 1141-1142 (NH). Position 1144 (cysteine 1144) interacts with Zn(2+). Residue asparagine 1186 coordinates S-adenosyl-L-methionine. A Post-SET domain is found at 1187 to 1203 (EKTVCRCGASNCSGFLG). Cysteine 1191 contributes to the Zn(2+) binding site. Residue arginine 1192 participates in S-adenosyl-L-methionine binding. Zn(2+)-binding residues include cysteine 1193 and cysteine 1198. The tract at residues 1206–1232 (PKTSASLSSEEKGKKAKKKTRRRRAKG) is disordered. Residues 1219 to 1230 (KKAKKKTRRRRA) are compositionally biased toward basic residues. A PHD-type 4; atypical zinc finger spans residues 1239 to 1286 (EDECFRCGDGGQLVLCDRKFCTKAYHLSCLGLGKRPFGKWECPWHHCD). Positions 1329–1365 (RADSSSSTKTEKPFPESLKSKGKRKKRRCWRRVTDGK) are disordered. Positions 1348-1359 (SKGKRKKRRCWR) are enriched in basic residues.

This sequence belongs to the class V-like SAM-binding methyltransferase superfamily. Histone-lysine methyltransferase family. SET2 subfamily. Interacts with HDAC1. Interacts (via PHD-type zinc fingers 1, 2 and 3) with SALL1. Interacts (via PHD-type 1, 2 and 3) with SALL4. Interacts with NANOG. Interacts with OGT. Interacts (via HMG box) with NKX2-5. During B-cell development, expressed in early B2 cell progenitors (pre- and pro-B cells) with a decrease in expression at later stages.

It localises to the nucleus. Its subcellular location is the chromosome. The catalysed reaction is L-lysyl(36)-[histone H3] + S-adenosyl-L-methionine = N(6)-methyl-L-lysyl(36)-[histone H3] + S-adenosyl-L-homocysteine + H(+). The enzyme catalyses L-lysyl(36)-[histone H3] + 2 S-adenosyl-L-methionine = N(6),N(6)-dimethyl-L-lysyl(36)-[histone H3] + 2 S-adenosyl-L-homocysteine + 2 H(+). In terms of biological role, histone methyltransferase which specifically dimethylates nucleosomal histone H3 at 'Lys-36' (H3K36me2). Also monomethylates nucleosomal histone H3 at 'Lys-36' (H3K36me) in vitro. Does not trimethylate nucleosomal histone H3 at 'Lys-36' (H3K36me3). However, specifically trimethylates histone H3 at 'Lys-36' (H3K36me3) at euchromatic regions in embryonic stem (ES) cells. By methylating histone H3 at 'Lys-36', involved in the regulation of gene transcription during various biological processes. In ES cells, associates with developmental transcription factors such as SALL1 and represses inappropriate gene transcription mediated by histone deacetylation. During heart development, associates with transcription factor NKX2-5 to repress transcription of NKX2-5 target genes. Plays an essential role in adipogenesis, by regulating expression of genes involved in pre-adipocyte differentiation. During T-cell receptor (TCR) and CD28-mediated T-cell activation, promotes the transcription of transcription factor BCL6 which is required for follicular helper T (Tfh) cell differentiation. During B-cell development, required for the generation of the B1 lineage. During B2 cell activation, may contribute to the control of isotype class switch recombination (CRS), splenic germinal center formation, and the humoral immune response. Plays a role in class switch recombination of the immunoglobulin heavy chain (IgH) locus during B-cell activation. By regulating the methylation of histone H3 at 'Lys-36' and histone H4 at 'Lys-20' at the IgH locus, involved in TP53BP1 recruitment to the IgH switch region and promotes the transcription of IgA. Its function is as follows. Histone methyltransferase which specifically dimethylates nucleosomal histone H3 at 'Lys-36' (H3K36me2). Mono-, di- and tri-methylates histone H3 at 'Lys-27' (H3K27me, H3K27me2, H3K27me3). Methylation of histone H3 at 'Lys-27' is controversial. May act as a transcription regulator that binds DNA and suppresses IL5 transcription through HDAC recruitment. The chain is Histone-lysine N-methyltransferase NSD2 (Nsd2) from Mus musculus (Mouse).